A 117-amino-acid chain; its full sequence is MDKKASRIRRATRARRKIAELCATRLVVHRTPRHTYAQVIAPNGSEVIAAASTVEKAIREQLGNTSNKAAAEAIGKLIAERAIEKGITNVAFDRSGFQYHGRVAALAESAREAGLKF.

It belongs to the universal ribosomal protein uL18 family. As to quaternary structure, part of the 50S ribosomal subunit; part of the 5S rRNA/L5/L18/L25 subcomplex. Contacts the 5S and 23S rRNAs.

This is one of the proteins that bind and probably mediate the attachment of the 5S RNA into the large ribosomal subunit, where it forms part of the central protuberance. This is Large ribosomal subunit protein uL18 from Aliivibrio fischeri (strain MJ11) (Vibrio fischeri).